A 175-amino-acid polypeptide reads, in one-letter code: MGRTLESKKQIVKKIEDLLDNSEMALVLDYKGLSTKEMSDLRSRLQQSDGVCKVTKNTLMRQAIKGKNSWTGLDSLLTGTNAFVLIKGDVGSAVKAVQAFQKETQKSETKGGLFEGKLLSQDEIKAIAKLPSKEALMGQIAGALNSITSKIAIGINEVPSGLARSLKQHSENGES.

This sequence belongs to the universal ribosomal protein uL10 family. Part of the ribosomal stalk of the 50S ribosomal subunit. The N-terminus interacts with L11 and the large rRNA to form the base of the stalk. The C-terminus forms an elongated spine to which L12 dimers bind in a sequential fashion forming a multimeric L10(L12)X complex.

Forms part of the ribosomal stalk, playing a central role in the interaction of the ribosome with GTP-bound translation factors. This is Large ribosomal subunit protein uL10 from Prochlorococcus marinus (strain NATL2A).